We begin with the raw amino-acid sequence, 284 residues long: Bifunctional protein FolD (284 aa).

NADP(+)-binding positions include 166-168 (GAS), Ser-191, and Ile-232.

The protein belongs to the tetrahydrofolate dehydrogenase/cyclohydrolase family. As to quaternary structure, homodimer.

The catalysed reaction is (6R)-5,10-methylene-5,6,7,8-tetrahydrofolate + NADP(+) = (6R)-5,10-methenyltetrahydrofolate + NADPH. It catalyses the reaction (6R)-5,10-methenyltetrahydrofolate + H2O = (6R)-10-formyltetrahydrofolate + H(+). It participates in one-carbon metabolism; tetrahydrofolate interconversion. Catalyzes the oxidation of 5,10-methylenetetrahydrofolate to 5,10-methenyltetrahydrofolate and then the hydrolysis of 5,10-methenyltetrahydrofolate to 10-formyltetrahydrofolate. The sequence is that of Bifunctional protein FolD from Neisseria meningitidis serogroup B (strain ATCC BAA-335 / MC58).